A 337-amino-acid chain; its full sequence is Heat-inducible transcription repressor HrcA (337 aa).

Belongs to the HrcA family.

Its function is as follows. Negative regulator of class I heat shock genes (grpE-dnaK-dnaJ and groELS operons). Prevents heat-shock induction of these operons. The sequence is that of Heat-inducible transcription repressor HrcA from Arthrobacter sp. (strain FB24).